The sequence spans 424 residues: Glutamyl-tRNA(Gln) amidotransferase subunit D (424 aa).

The segment at 56 to 78 (GETANGSRNGGKGCKTNEEELPE) is disordered. In terms of domain architecture, Asparaginase/glutaminase spans 84 to 413 (PKIAILSTGG…EKAAGMLRED (330 aa)). Residues Thr-94, Thr-170, Asp-171, and Lys-247 contribute to the active site.

The protein belongs to the asparaginase 1 family. GatD subfamily. In terms of assembly, heterodimer of GatD and GatE.

It catalyses the reaction L-glutamyl-tRNA(Gln) + L-glutamine + ATP + H2O = L-glutaminyl-tRNA(Gln) + L-glutamate + ADP + phosphate + H(+). Allows the formation of correctly charged Gln-tRNA(Gln) through the transamidation of misacylated Glu-tRNA(Gln) in organisms which lack glutaminyl-tRNA synthetase. The reaction takes place in the presence of glutamine and ATP through an activated gamma-phospho-Glu-tRNA(Gln). The GatDE system is specific for glutamate and does not act on aspartate. The protein is Glutamyl-tRNA(Gln) amidotransferase subunit D of Methanosarcina acetivorans (strain ATCC 35395 / DSM 2834 / JCM 12185 / C2A).